The sequence spans 387 residues: 3-ketoacyl-CoA thiolase (387 aa).

Cysteine 91 (acyl-thioester intermediate) is an active-site residue. Residues histidine 343 and cysteine 373 each act as proton acceptor in the active site.

Belongs to the thiolase-like superfamily. Thiolase family. In terms of assembly, heterotetramer of two alpha chains (FadB) and two beta chains (FadA).

It localises to the cytoplasm. It carries out the reaction an acyl-CoA + acetyl-CoA = a 3-oxoacyl-CoA + CoA. It participates in lipid metabolism; fatty acid beta-oxidation. Its function is as follows. Catalyzes the final step of fatty acid oxidation in which acetyl-CoA is released and the CoA ester of a fatty acid two carbons shorter is formed. The chain is 3-ketoacyl-CoA thiolase from Klebsiella pneumoniae subsp. pneumoniae (strain ATCC 700721 / MGH 78578).